A 226-amino-acid polypeptide reads, in one-letter code: tRNA (guanine-N(7)-)-methyltransferase (226 aa).

Positions 1–22 (MTTPQQPHGPLRSFGRLKSRPV) are disordered. Residues Glu59, Glu84, Asp111, and Asp133 each contribute to the S-adenosyl-L-methionine site. The active site involves Asp133. Lys137 serves as a coordination point for substrate. The tract at residues 139–144 (RHNKRR) is interaction with RNA. Substrate contacts are provided by residues Asp169 and 206–209 (TRYE).

It belongs to the class I-like SAM-binding methyltransferase superfamily. TrmB family.

The enzyme catalyses guanosine(46) in tRNA + S-adenosyl-L-methionine = N(7)-methylguanosine(46) in tRNA + S-adenosyl-L-homocysteine. It participates in tRNA modification; N(7)-methylguanine-tRNA biosynthesis. Its function is as follows. Catalyzes the formation of N(7)-methylguanine at position 46 (m7G46) in tRNA. The sequence is that of tRNA (guanine-N(7)-)-methyltransferase from Caulobacter vibrioides (strain ATCC 19089 / CIP 103742 / CB 15) (Caulobacter crescentus).